Reading from the N-terminus, the 686-residue chain is ATP-dependent zinc metalloprotease FtsH 2 (686 aa).

Residues 1 to 11 (MKKNIKDIFKN) are Cytoplasmic-facing. A helical membrane pass occupies residues 12–32 (FNIFWFCFIFLLLSLLYCLIM). Residues 33–178 (MEISHQHDNN…LQRIPYQPYF (146 aa)) are Extracellular-facing. The chain crosses the membrane as a helical span at residues 179–199 (GFAPFISAVNICILIIIFYFI). Topologically, residues 200-686 (YNSIEKTSAQ…QKSEKEDCNK (487 aa)) are cytoplasmic. 272-279 (GPPGVGKT) lines the ATP pocket. A Zn(2+)-binding site is contributed by His-493. Glu-494 is a catalytic residue. Zn(2+)-binding residues include His-497 and Asp-569.

It in the central section; belongs to the AAA ATPase family. This sequence in the C-terminal section; belongs to the peptidase M41 family. In terms of assembly, homohexamer. Zn(2+) serves as cofactor.

The protein resides in the cell membrane. Its function is as follows. Acts as a processive, ATP-dependent zinc metallopeptidase for both cytoplasmic and membrane proteins. Plays a role in the quality control of integral membrane proteins. This is ATP-dependent zinc metalloprotease FtsH 2 from Phytoplasma mali (strain AT).